A 270-amino-acid polypeptide reads, in one-letter code: Protein-ADP-ribose hydrolase (270 aa).

The Macro domain maps to 73–267 (VSVKDCQKTN…LYDTYLQKEN (195 aa)). ADP-D-ribose-binding residues include Asp-92, Ile-93, and Asn-106. Residues Cys-112, His-117, and Cys-119 each contribute to the Zn(2+) site. ADP-D-ribose contacts are provided by Cys-119, Ile-120, Asp-121, Ser-212, Thr-213, Gly-214, Glu-215, and Phe-216.

The protein belongs to the MacroD-type family. Zn-Macro subfamily. The cofactor is Zn(2+).

It catalyses the reaction 4-O-(ADP-D-ribosyl)-L-aspartyl-[protein] + H2O = L-aspartyl-[protein] + ADP-D-ribose + H(+). Functionally, ADP-ribosylhydrolase that specifically reverses the SirTM-mediated mono-ADP-ribosylation at an asparatate residue of GcvH-L, by releasing ADP-ribose from the target protein. May play a role in the regulation of the response to host-induced oxidative stress. This Streptococcus pyogenes serotype M1 protein is Protein-ADP-ribose hydrolase.